A 350-amino-acid polypeptide reads, in one-letter code: D-guloside 3-dehydrogenase (350 aa).

Belongs to the zinc-containing alcohol dehydrogenase family. It depends on Zn(2+) as a cofactor.

The enzyme catalyses a D-guloside + NAD(+) = a 3-dehydro-D-guloside + NADH + H(+). Catalyzes the NAD(+)-dependent oxidation of the hydroxyl group at C3 of D-gulosides leading to 3-dehydro-D-gulosides. Probably functions in a metabolic pathway that transforms D-gulosides to D-glucosides. Is also able to catalyze the reverse reactions, i.e. the NADH-dependent reduction of the oxo group at C3 of 3-dehydro-D-gulosides leading to D-gulosides. In vitro, can oxidize D-gulose and methyl beta-D-guloside, and reduce methyl alpha-3-dehydro-D-guloside and methyl beta-3-dehydro-D-guloside. However, the actual specific physiological substrates for this metabolic pathway are unknown. This chain is D-guloside 3-dehydrogenase (ycjQ), found in Shigella flexneri.